The following is a 308-amino-acid chain: Elongation factor Ts (308 aa).

Residues 80–83 (TDFV) form an involved in Mg(2+) ion dislocation from EF-Tu region.

It belongs to the EF-Ts family.

It is found in the cytoplasm. Its function is as follows. Associates with the EF-Tu.GDP complex and induces the exchange of GDP to GTP. It remains bound to the aminoacyl-tRNA.EF-Tu.GTP complex up to the GTP hydrolysis stage on the ribosome. The protein is Elongation factor Ts of Rhizobium leguminosarum bv. trifolii (strain WSM2304).